Reading from the N-terminus, the 189-residue chain is Xanthine phosphoribosyltransferase (189 aa).

Xanthine-binding residues include L20 and N27. Position 128–132 (128–132 (ANGQA)) interacts with 5-phospho-alpha-D-ribose 1-diphosphate. K156 provides a ligand contact to xanthine.

This sequence belongs to the purine/pyrimidine phosphoribosyltransferase family. Xpt subfamily. As to quaternary structure, homodimer.

It localises to the cytoplasm. The catalysed reaction is XMP + diphosphate = xanthine + 5-phospho-alpha-D-ribose 1-diphosphate. It functions in the pathway purine metabolism; XMP biosynthesis via salvage pathway; XMP from xanthine: step 1/1. Converts the preformed base xanthine, a product of nucleic acid breakdown, to xanthosine 5'-monophosphate (XMP), so it can be reused for RNA or DNA synthesis. The polypeptide is Xanthine phosphoribosyltransferase (Leuconostoc mesenteroides subsp. mesenteroides (strain ATCC 8293 / DSM 20343 / BCRC 11652 / CCM 1803 / JCM 6124 / NCDO 523 / NBRC 100496 / NCIMB 8023 / NCTC 12954 / NRRL B-1118 / 37Y)).